Reading from the N-terminus, the 247-residue chain is UDP-2,3-diacylglucosamine hydrolase (247 aa).

Residues Asp-8, His-10, Asp-41, Asn-79, and His-114 each contribute to the Mn(2+) site. Position 79–80 (79–80 (NR)) interacts with substrate. Positions 122, 160, 171, 174, and 202 each coordinate substrate. 2 residues coordinate Mn(2+): His-202 and His-204.

This sequence belongs to the LpxH family. Requires Mn(2+) as cofactor.

It localises to the cell inner membrane. The enzyme catalyses UDP-2-N,3-O-bis[(3R)-3-hydroxytetradecanoyl]-alpha-D-glucosamine + H2O = 2-N,3-O-bis[(3R)-3-hydroxytetradecanoyl]-alpha-D-glucosaminyl 1-phosphate + UMP + 2 H(+). It participates in glycolipid biosynthesis; lipid IV(A) biosynthesis; lipid IV(A) from (3R)-3-hydroxytetradecanoyl-[acyl-carrier-protein] and UDP-N-acetyl-alpha-D-glucosamine: step 4/6. Its function is as follows. Hydrolyzes the pyrophosphate bond of UDP-2,3-diacylglucosamine to yield 2,3-diacylglucosamine 1-phosphate (lipid X) and UMP by catalyzing the attack of water at the alpha-P atom. Involved in the biosynthesis of lipid A, a phosphorylated glycolipid that anchors the lipopolysaccharide to the outer membrane of the cell. The polypeptide is UDP-2,3-diacylglucosamine hydrolase (Xanthomonas campestris pv. campestris (strain B100)).